A 162-amino-acid chain; its full sequence is Nucleotide-binding protein Franean1_6074 (162 aa).

This sequence belongs to the YajQ family.

In terms of biological role, nucleotide-binding protein. The polypeptide is Nucleotide-binding protein Franean1_6074 (Parafrankia sp. (strain EAN1pec)).